We begin with the raw amino-acid sequence, 134 residues long: Lymphocyte antigen 6 complex locus protein G6d (134 aa).

Residues Met-1–Gly-19 form the signal peptide. A UPAR/Ly6 domain is found at Met-22–Leu-121. 5 cysteine pairs are disulfide-bonded: Cys-24–Cys-48, Cys-27–Cys-35, Cys-42–Cys-76, Cys-82–Cys-101, and Cys-102–Cys-107. Thr-68 carries an O-linked (GalNAc...) threonine glycan. Asn-108 carries the GPI-anchor amidated asparagine lipid modification. Positions Gly-109 to Gln-134 are cleaved as a propeptide — removed in mature form.

Homodimer. O-glycosylated.

The protein resides in the cell membrane. The sequence is that of Lymphocyte antigen 6 complex locus protein G6d (Ly6g6d) from Rattus norvegicus (Rat).